Reading from the N-terminus, the 289-residue chain is Diaminopimelate epimerase (289 aa).

Substrate-binding residues include N11 and N78. C87 serves as the catalytic Proton donor. Substrate-binding positions include 88-89, N163, N199, and 217-218; these read GN and ER. Catalysis depends on C226, which acts as the Proton acceptor. 227–228 is a substrate binding site; that stretch reads GT.

Belongs to the diaminopimelate epimerase family. In terms of assembly, homodimer.

It is found in the cytoplasm. The catalysed reaction is (2S,6S)-2,6-diaminopimelate = meso-2,6-diaminopimelate. The protein operates within amino-acid biosynthesis; L-lysine biosynthesis via DAP pathway; DL-2,6-diaminopimelate from LL-2,6-diaminopimelate: step 1/1. Catalyzes the stereoinversion of LL-2,6-diaminopimelate (L,L-DAP) to meso-diaminopimelate (meso-DAP), a precursor of L-lysine and an essential component of the bacterial peptidoglycan. The protein is Diaminopimelate epimerase of Mycolicibacterium vanbaalenii (strain DSM 7251 / JCM 13017 / BCRC 16820 / KCTC 9966 / NRRL B-24157 / PYR-1) (Mycobacterium vanbaalenii).